A 490-amino-acid chain; its full sequence is Cobyric acid synthase (490 aa).

Residues 252–439 (RLKVVVPVLP…LHGLFESTAA (188 aa)) enclose the GATase cobBQ-type domain. Residue C333 is the Nucleophile of the active site. The active site involves H431.

This sequence belongs to the CobB/CobQ family. CobQ subfamily.

It functions in the pathway cofactor biosynthesis; adenosylcobalamin biosynthesis. Its function is as follows. Catalyzes amidations at positions B, D, E, and G on adenosylcobyrinic A,C-diamide. NH(2) groups are provided by glutamine, and one molecule of ATP is hydrogenolyzed for each amidation. In Pseudomonas aeruginosa (strain LESB58), this protein is Cobyric acid synthase.